The sequence spans 548 residues: MASAAVGNYEEEIVRPVADFSPSLWGDHFLSFSIDNHVAQKYAQEIEPLKEQTRSMLVATGRKLVDTLNLIDTIERLGISYHFEKEIDEILDQIYNQNSNSSDLFTSALLFRLLRQHGFNISPEIFSKFQDENGKFKESLASDVVGLLNLYEASHVRTHADDILEAALAFSTIHLESAAPHLKSPLREQVAHALEQCLHKGVPRVETRFFISSIYEKEQSKNNVLLRFAILDFNLLQMLHKQELAEVSRWWKDLDFVTTLPYARDRVVECYFWALGVYFEPQYSQARVMLVKTISMISIVDDTFDAYGTVKELETYTDAIQRWDINEIDRLPDYMKISYKAILDLYKDYEKELSSAGRSHIVCHAIERMKEVVRNYNVESTWFIEGYMPPVSEYLSNALATTTYYYLATTSYLGMKSATEQDFEWLSKNPKILEASVIICRVIDDTATYEVEKSRGQIATGIECCMRDYGVSTKEAMDKFQQMAETAWKDLNEGLLRPTPVSAELLTPILNLARIVEVTYIHNLDGYTHPEKVLKPHIIGLLVDSIDI.

Residues D301, D305, D444, T448, and E452 each contribute to the Mg(2+) site. Residues 301–305 (DDTFD) carry the DDXXD motif motif.

The protein belongs to the terpene synthase family. As to quaternary structure, monomer. Requires Mg(2+) as cofactor.

Its subcellular location is the cytoplasm. It carries out the reaction (2E,6E)-farnesyl diphosphate = (+)-5-epi-aristolochene + diphosphate. It participates in secondary metabolite biosynthesis; terpenoid biosynthesis. In terms of biological role, catalyzes the cyclization of trans,trans-farnesyl diphosphate (FPP) to the bicyclic intermediate 5-epi-aristolochene, initial step in the conversion of FPP to the sesquiterpenoid antifungal phytoalexin capsidiol. Produces germacrene A as an enzyme-bound intermediate that is not released by the enzyme, but is further cyclized to produce the bicyclic 5-epi-aristolochene. The chain is Probable 5-epi-aristolochene synthase 4 from Nicotiana attenuata (Coyote tobacco).